A 382-amino-acid polypeptide reads, in one-letter code: Homeobox protein SHOOT MERISTEMLESS (382 aa).

The segment at 26–59 (MMMMMPPIMTSHQHHGHDHQHQQQEHDGYAYQSH) is disordered. The segment covering 44-53 (HQHQQQEHDG) has biased composition (basic and acidic residues). Residues 262 to 282 (ELKGQLLRKYSGYLGSLKQEF) enclose the ELK domain. A DNA-binding region (homeobox; TALE-type) is located at residues 283 to 346 (MKKRKKGKLP…NQRKRHWKPS (64 aa)).

The protein belongs to the TALE/KNOX homeobox family. In terms of assembly, forms homodimers. May form heterodimeric complexes with TALE/BELL proteins BEL1, BLH2, BLH3, BLH8/PNF, BLH9/PNY and ATH1. Interacts with CCT8. Binds to MBP2C; this interaction reduces RNA binding capacity. Interacts with FTIP3 and FTIP4. Expressed in all four types of shoot apical meristems (SAM) i.e. in vegetative, axillary, inflorescence and floral.

The protein resides in the nucleus. It localises to the cell junction. The protein localises to the plasmodesma. Its subcellular location is the cytoplasm. It is found in the endosome. The protein resides in the cell membrane. Functionally, required for shoot apical meristem (SAM) formation during embryogenesis. Negatively regulates ASYMMETRIC LEAVES1 (AS1) and ASYMMETRIC LEAVES2 (AS2 or LBD6). Probably binds to the DNA sequence 5'-TGAC-3'. Binds to RNA. The polypeptide is Homeobox protein SHOOT MERISTEMLESS (Arabidopsis thaliana (Mouse-ear cress)).